Here is a 716-residue protein sequence, read N- to C-terminus: Polyribonucleotide nucleotidyltransferase (716 aa).

Residues Asp488 and Asp494 each coordinate Mg(2+). A KH domain is found at 555 to 614 (PKIETITIPTDKIREVIGTGGKVIREIVATTGAKVDINDEGTVKVSASDGAKIKAAIDWI). Residues 624–692 (GAIYDGKVVK…DRGKTKLSMK (69 aa)) form the S1 motif domain. Residues 695-716 (DQETGEDLSKKEAVSPEEAVNT) form a disordered region.

This sequence belongs to the polyribonucleotide nucleotidyltransferase family. The cofactor is Mg(2+).

The protein resides in the cytoplasm. The enzyme catalyses RNA(n+1) + phosphate = RNA(n) + a ribonucleoside 5'-diphosphate. Functionally, involved in mRNA degradation. Catalyzes the phosphorolysis of single-stranded polyribonucleotides processively in the 3'- to 5'-direction. The protein is Polyribonucleotide nucleotidyltransferase of Caulobacter sp. (strain K31).